Consider the following 245-residue polypeptide: 5-oxoprolinase subunit A (245 aa).

It belongs to the LamB/PxpA family. As to quaternary structure, forms a complex composed of PxpA, PxpB and PxpC.

It carries out the reaction 5-oxo-L-proline + ATP + 2 H2O = L-glutamate + ADP + phosphate + H(+). Its function is as follows. Catalyzes the cleavage of 5-oxoproline to form L-glutamate coupled to the hydrolysis of ATP to ADP and inorganic phosphate. This chain is 5-oxoprolinase subunit A, found in Neisseria meningitidis serogroup A / serotype 4A (strain DSM 15465 / Z2491).